Consider the following 382-residue polypeptide: Dihydroflavonol 4-reductase (382 aa).

Positions 44 and 163 each coordinate NADP(+).

It belongs to the NAD(P)-dependent epimerase/dehydratase family. Dihydroflavonol-4-reductase subfamily.

It carries out the reaction a (2R,3S,4S)-leucoanthocyanidin + NADP(+) = a (2R,3R)-dihydroflavonol + NADPH + H(+). It catalyses the reaction (2S)-flavan-4-ol + NADP(+) = (2S)-flavanone + NADPH + H(+). The protein operates within pigment biosynthesis; anthocyanin biosynthesis. In terms of biological role, bifunctional enzyme involved in flavonoid metabolism. In Arabidopsis thaliana (Mouse-ear cress), this protein is Dihydroflavonol 4-reductase (DFRA).